We begin with the raw amino-acid sequence, 439 residues long: Large ribosomal subunit protein mL44 (439 aa).

Disordered stretches follow at residues 39–73 and 247–282; these read QSTAALAQHDASHDLNNDRFPPLEPLPPAAESLPS and KAMEEQDQDKTPDEEEAEMVANEQDQDVSYDRYGNP. A compositionally biased stretch (basic and acidic residues) spans 247–257; it reads KAMEEQDQDKT. The segment covering 258-274 has biased composition (acidic residues); sequence PDEEEAEMVANEQDQDV.

This sequence belongs to the ribonuclease III family. Mitochondrion-specific ribosomal protein mL44 subfamily. In terms of assembly, component of the mitochondrial large ribosomal subunit (mt-LSU). Mature N.crassa 74S mitochondrial ribosomes consist of a small (37S) and a large (54S) subunit. The 37S small subunit contains a 16S ribosomal RNA (16S mt-rRNA) and 32 different proteins. The 54S large subunit contains a 23S rRNA (23S mt-rRNA) and 42 different proteins. mL44 forms a heterodimer with mL57 and stabilizes rRNA expansion segments 1/2 at a membrane-facing protuberance close to the point of attachment of the ribosome to the translocon in the membrane.

The protein resides in the mitochondrion. Functionally, component of the mitochondrial ribosome (mitoribosome), a dedicated translation machinery responsible for the synthesis of mitochondrial genome-encoded proteins, including at least some of the essential transmembrane subunits of the mitochondrial respiratory chain. The mitoribosomes are attached to the mitochondrial inner membrane and translation products are cotranslationally integrated into the membrane. This is Large ribosomal subunit protein mL44 (mrpl3) from Neurospora crassa (strain ATCC 24698 / 74-OR23-1A / CBS 708.71 / DSM 1257 / FGSC 987).